We begin with the raw amino-acid sequence, 366 residues long: 3-dehydroquinate synthase (366 aa).

NAD(+) contacts are provided by residues 75–80 (DGEEYK), 109–113 (GVVGD), 133–134 (TT), Lys-146, Lys-155, and 173–176 (TLDT). Zn(2+)-binding residues include Glu-188, His-251, and His-268.

The protein belongs to the sugar phosphate cyclases superfamily. Dehydroquinate synthase family. Co(2+) is required as a cofactor. Zn(2+) serves as cofactor. The cofactor is NAD(+).

Its subcellular location is the cytoplasm. The enzyme catalyses 7-phospho-2-dehydro-3-deoxy-D-arabino-heptonate = 3-dehydroquinate + phosphate. The protein operates within metabolic intermediate biosynthesis; chorismate biosynthesis; chorismate from D-erythrose 4-phosphate and phosphoenolpyruvate: step 2/7. Its function is as follows. Catalyzes the conversion of 3-deoxy-D-arabino-heptulosonate 7-phosphate (DAHP) to dehydroquinate (DHQ). This chain is 3-dehydroquinate synthase, found in Nitrosospira multiformis (strain ATCC 25196 / NCIMB 11849 / C 71).